The following is a 627-amino-acid chain: UvrABC system protein C (627 aa).

The GIY-YIG domain maps to 22-100; the sequence is NNPGVYRMFN…IKRLRPRFNV (79 aa). The UVR domain maps to 210-245; that stretch reads QSVKDHLAAAMQAASADLDFEHAAVYRDRLAALSHV.

It belongs to the UvrC family. Interacts with UvrB in an incision complex.

It is found in the cytoplasm. Its function is as follows. The UvrABC repair system catalyzes the recognition and processing of DNA lesions. UvrC both incises the 5' and 3' sides of the lesion. The N-terminal half is responsible for the 3' incision and the C-terminal half is responsible for the 5' incision. The sequence is that of UvrABC system protein C from Brucella abortus biovar 1 (strain 9-941).